Here is a 92-residue protein sequence, read N- to C-terminus: Non-specific lipid-transfer protein B (92 aa).

4 cysteine pairs are disulfide-bonded: cysteine 3/cysteine 51, cysteine 13/cysteine 28, cysteine 29/cysteine 74, and cysteine 49/cysteine 88.

The protein belongs to the plant LTP family.

Functionally, plant non-specific lipid-transfer proteins transfer phospholipids as well as galactolipids across membranes. May play a role in wax or cutin deposition in the cell walls of expanding epidermal cells and certain secretory tissues. The protein is Non-specific lipid-transfer protein B of Ricinus communis (Castor bean).